The chain runs to 199 residues: Molybdenum cofactor guanylyltransferase (199 aa).

GTP contacts are provided by residues 12–14, lysine 25, asparagine 53, aspartate 71, and aspartate 101; that span reads LAG. A Mg(2+)-binding site is contributed by aspartate 101.

This sequence belongs to the MobA family. As to quaternary structure, monomer. It depends on Mg(2+) as a cofactor.

The protein resides in the cytoplasm. It catalyses the reaction Mo-molybdopterin + GTP + H(+) = Mo-molybdopterin guanine dinucleotide + diphosphate. Functionally, transfers a GMP moiety from GTP to Mo-molybdopterin (Mo-MPT) cofactor (Moco or molybdenum cofactor) to form Mo-molybdopterin guanine dinucleotide (Mo-MGD) cofactor. The sequence is that of Molybdenum cofactor guanylyltransferase from Cupriavidus pinatubonensis (strain JMP 134 / LMG 1197) (Cupriavidus necator (strain JMP 134)).